A 629-amino-acid polypeptide reads, in one-letter code: Citrate (Re)-synthase (629 aa).

Residues 59–329 (IFITDTTFRD…TNGIDTTVIT (271 aa)) enclose the Pyruvate carboxyltransferase domain. Residues 497–601 (VMQRFIEEYP…GVDIRVEDLV (105 aa)) form the Cache domain.

The protein belongs to the alpha-IPM synthase/homocitrate synthase family. In terms of assembly, homotetramer. Requires Co(2+) as cofactor. Mn(2+) is required as a cofactor.

The catalysed reaction is oxaloacetate + acetyl-CoA + H2O = citrate + CoA + H(+). Its activity is regulated as follows. Inhibited by p-hydroxymercuribenzoate and EDTA. In terms of biological role, catalyzes the condensation of the acetyl group of acetyl-CoA with oxaloacetate to form citrate. This Syntrophus aciditrophicus (strain SB) protein is Citrate (Re)-synthase.